The sequence spans 409 residues: NADH-quinone oxidoreductase subunit D (409 aa).

It belongs to the complex I 49 kDa subunit family. NDH-1 is composed of 14 different subunits. Subunits NuoB, C, D, E, F, and G constitute the peripheral sector of the complex.

It localises to the cell inner membrane. It carries out the reaction a quinone + NADH + 5 H(+)(in) = a quinol + NAD(+) + 4 H(+)(out). Functionally, NDH-1 shuttles electrons from NADH, via FMN and iron-sulfur (Fe-S) centers, to quinones in the respiratory chain. The immediate electron acceptor for the enzyme in this species is believed to be ubiquinone. Couples the redox reaction to proton translocation (for every two electrons transferred, four hydrogen ions are translocated across the cytoplasmic membrane), and thus conserves the redox energy in a proton gradient. This chain is NADH-quinone oxidoreductase subunit D, found in Campylobacter concisus (strain 13826).